The following is a 156-amino-acid chain: S-ribosylhomocysteine lyase (156 aa).

Residues histidine 54, histidine 58, and cysteine 126 each coordinate Fe cation.

Belongs to the LuxS family. Homodimer. Fe cation serves as cofactor.

It catalyses the reaction S-(5-deoxy-D-ribos-5-yl)-L-homocysteine = (S)-4,5-dihydroxypentane-2,3-dione + L-homocysteine. Involved in the synthesis of autoinducer 2 (AI-2) which is secreted by bacteria and is used to communicate both the cell density and the metabolic potential of the environment. The regulation of gene expression in response to changes in cell density is called quorum sensing. Catalyzes the transformation of S-ribosylhomocysteine (RHC) to homocysteine (HC) and 4,5-dihydroxy-2,3-pentadione (DPD). The protein is S-ribosylhomocysteine lyase of Shouchella clausii (strain KSM-K16) (Alkalihalobacillus clausii).